An 882-amino-acid chain; its full sequence is Translation initiation factor IF-2 (882 aa).

The disordered stretch occupies residues 28-296 (GIRKSADDSV…LQQGFQKPAQ (269 aa)). Positions 67–81 (STLNIPGTGGKSKSV) are enriched in polar residues. Residues 92–209 (VKRDPQEAER…RMAEENKWTD (118 aa)) show a composition bias toward basic and acidic residues. Residues 244–258 (GRGRNAKAARPKKGN) show a composition bias toward basic residues. Residues 259 to 272 (KHAESKADREEARA) are compositionally biased toward basic and acidic residues. In terms of domain architecture, tr-type G spans 381 to 550 (PRAPVVTIMG…LLQAEVLELK (170 aa)). A G1 region spans residues 390-397 (GHVDHGKT). 390–397 (GHVDHGKT) provides a ligand contact to GTP. A G2 region spans residues 415-419 (GITQH). The segment at 436-439 (DTPG) is G3. Residues 436–440 (DTPGH) and 490–493 (NKID) contribute to the GTP site. The segment at 490–493 (NKID) is G4. A G5 region spans residues 526–528 (SAK). Position 800 is an N6-acetyllysine (lysine 800).

This sequence belongs to the TRAFAC class translation factor GTPase superfamily. Classic translation factor GTPase family. IF-2 subfamily.

It localises to the cytoplasm. Functionally, one of the essential components for the initiation of protein synthesis. Protects formylmethionyl-tRNA from spontaneous hydrolysis and promotes its binding to the 30S ribosomal subunits. Also involved in the hydrolysis of GTP during the formation of the 70S ribosomal complex. The polypeptide is Translation initiation factor IF-2 (Shigella boydii serotype 4 (strain Sb227)).